Here is a 419-residue protein sequence, read N- to C-terminus: UDP-N-acetylglucosamine 1-carboxyvinyltransferase (419 aa).

Residue Lys22 to Asn23 coordinates phosphoenolpyruvate. Arg92 serves as a coordination point for UDP-N-acetyl-alpha-D-glucosamine. Catalysis depends on Cys116, which acts as the Proton donor. 2-(S-cysteinyl)pyruvic acid O-phosphothioketal is present on Cys116. Asp306 and Ile328 together coordinate UDP-N-acetyl-alpha-D-glucosamine.

The protein belongs to the EPSP synthase family. MurA subfamily.

The protein localises to the cytoplasm. It carries out the reaction phosphoenolpyruvate + UDP-N-acetyl-alpha-D-glucosamine = UDP-N-acetyl-3-O-(1-carboxyvinyl)-alpha-D-glucosamine + phosphate. Its pathway is cell wall biogenesis; peptidoglycan biosynthesis. In terms of biological role, cell wall formation. Adds enolpyruvyl to UDP-N-acetylglucosamine. The polypeptide is UDP-N-acetylglucosamine 1-carboxyvinyltransferase (Pseudoalteromonas translucida (strain TAC 125)).